The chain runs to 229 residues: Thylakoid lumenal 19 kDa protein, chloroplastic (229 aa).

The protein localises to the plastid. It localises to the chloroplast thylakoid lumen. This Arabidopsis thaliana (Mouse-ear cress) protein is Thylakoid lumenal 19 kDa protein, chloroplastic.